The chain runs to 169 residues: uncharacterized protein (169 aa).

Helical transmembrane passes span 62 to 84 (RWGF…LLGL) and 94 to 116 (ALML…YWWF).

The protein resides in the cell membrane. This is an uncharacterized protein from Archaeoglobus fulgidus (strain ATCC 49558 / DSM 4304 / JCM 9628 / NBRC 100126 / VC-16).